The sequence spans 146 residues: Hemoglobin subunit beta-1 (146 aa).

The Globin domain occupies 2-146 (HWTAEEKSAI…VAHALAHRYH (145 aa)). Heme b is bound by residues H63 and H92.

Belongs to the globin family. Heterotetramer of two alpha chains and two beta chains. In terms of tissue distribution, red blood cells.

Involved in oxygen transport from the lung to the various peripheral tissues. The polypeptide is Hemoglobin subunit beta-1 (Drymarchon melanurus erebennus (Texas indigo snake)).